Here is a 684-residue protein sequence, read N- to C-terminus: MEANHSEQLSAERQSTPPGDSSSLPSHNGLEKEDGQDSPTPVQPPEKEASVHPDISEELNRQLEDIINTYGSAASTAGKEGSARASEQPENAESPDNEDGDCEETTEEAGREPVASGEPPTVKEPVSNKEQKLEKKILKGLGKEANLLMQNLNKLQTPEEKFDFLFKKYAELLDEHRTEQKKLKLLQKKQVQIQKEKDQLQGEHSRAILARSKLESLCRELQRHNKTLKEEALQRAREEEEKRKEITSHFQSTLTDIQGQIEQQSERNMKLCQENTELAEKLKSIIDQYELREEHLDKIFKHRELQQKLVDAKLEQAQEMMKEAEERHKREKEYLLNQAAEWKLQAKVLKEQETVLQAQLTLYSGRFEEFQSTLTKSNEVFATFKQEMDKTTKKMKKLEKDTATWKARFENCNKALLDMIEEKALRAKEYECFVMKIGRLENLCRALQEERNELHKKIRDAEISEKDDQSQHNSDEEPESNVSVDQEIDAEEVNSVQTAVKNLATAFMIIHHPESTPHQSKETQPEIGSSQESADAALKEPEQPPLIPSRDSESPLPPLTPQAEAEGGSDAEPPSKASNSPAGLGAETQCEGLPVGAQADQASWKPEAEASGQAPQAPTEASLQKMEADVPAPACAAEEHVAAMVPACEPSRQPPRAAAEELPVGASAGPQPRNVADTNLEGVD.

Residues 1-26 (MEANHSEQLSAERQSTPPGDSSSLPS) show a composition bias toward polar residues. Residues 1–132 (MEANHSEQLS…KEPVSNKEQK (132 aa)) form a disordered region. Basic and acidic residues predominate over residues 45 to 64 (PEKEASVHPDISEELNRQLE). Acidic residues predominate over residues 93–107 (ESPDNEDGDCEETTE). 2 coiled-coil regions span residues 135 to 351 (KKIL…VLKE) and 378 to 467 (NEVF…SEKD). A compositionally biased stretch (basic and acidic residues) spans 458–475 (IRDAEISEKDDQSQHNSD). Disordered regions lie at residues 458–485 (IRDA…VSVD), 514–632 (ESTP…DVPA), and 646–684 (PACE…EGVD). Residues serine 474 and serine 483 each carry the phosphoserine modification. Basic and acidic residues predominate over residues 514-524 (ESTPHQSKETQ). The segment covering 613–622 (QAPQAPTEAS) has biased composition (polar residues).

Belongs to the taxilin family. As to quaternary structure, binds to the C-terminal coiled coil region of syntaxin family members STX1A, STX3A and STX4A. Has a preference for STX1A. Expressed in skeletal muscle.

Functionally, promotes motor nerve regeneration. May be involved in intracellular vesicle traffic. The chain is Beta-taxilin (TXLNB) from Homo sapiens (Human).